The following is a 1157-amino-acid chain: Pesticidal crystal protein Cry9Ca (1157 aa).

This sequence belongs to the delta endotoxin family.

Promotes colloidosmotic lysis by binding to the midgut epithelial cells of Lepidoptera larvae. Has a fairly broad spectrum of activity against members of the Pyralidae, Plutellidae, Sphingidae and Noctuidae families. It was the first insecticidal crystal protein characterized with activity against cutworms. No activity is observed against some beetles, such as the Colorado potato beetle. The chain is Pesticidal crystal protein Cry9Ca (cry9Ca) from Bacillus thuringiensis subsp. tolworthi.